The primary structure comprises 51 residues: Large ribosomal subunit protein eL39 (51 aa).

Belongs to the eukaryotic ribosomal protein eL39 family. As to quaternary structure, interacts with IMPACT.

This is Large ribosomal subunit protein eL39 (RPL39) from Gallus gallus (Chicken).